The primary structure comprises 377 residues: Chaperone protein DnaJ (377 aa).

The J domain maps to 5-70 (DYYQILGIPK…EKRSAYDQYG (66 aa)). The CR-type zinc-finger motif lies at 132 to 210 (GIKKEIQIPT…CHGQGRVETY (79 aa)). Zn(2+) is bound by residues C145, C148, C162, C165, C184, C187, C198, and C201. CXXCXGXG motif repeat units lie at residues 145–152 (CKTCYGSG), 162–169 (CSTCHGKG), 184–191 (CPTCHGKG), and 198–205 (CNLCHGQG).

It belongs to the DnaJ family. Homodimer. Requires Zn(2+) as cofactor.

The protein resides in the cytoplasm. Functionally, participates actively in the response to hyperosmotic and heat shock by preventing the aggregation of stress-denatured proteins and by disaggregating proteins, also in an autonomous, DnaK-independent fashion. Unfolded proteins bind initially to DnaJ; upon interaction with the DnaJ-bound protein, DnaK hydrolyzes its bound ATP, resulting in the formation of a stable complex. GrpE releases ADP from DnaK; ATP binding to DnaK triggers the release of the substrate protein, thus completing the reaction cycle. Several rounds of ATP-dependent interactions between DnaJ, DnaK and GrpE are required for fully efficient folding. Also involved, together with DnaK and GrpE, in the DNA replication of plasmids through activation of initiation proteins. This Buchnera aphidicola subsp. Acyrthosiphon pisum (strain Tuc7) protein is Chaperone protein DnaJ.